Here is a 208-residue protein sequence, read N- to C-terminus: Protein-L-isoaspartate O-methyltransferase (208 aa).

Residue Ser59 is part of the active site.

This sequence belongs to the methyltransferase superfamily. L-isoaspartyl/D-aspartyl protein methyltransferase family.

Its subcellular location is the cytoplasm. It carries out the reaction [protein]-L-isoaspartate + S-adenosyl-L-methionine = [protein]-L-isoaspartate alpha-methyl ester + S-adenosyl-L-homocysteine. In terms of biological role, catalyzes the methyl esterification of L-isoaspartyl residues in peptides and proteins that result from spontaneous decomposition of normal L-aspartyl and L-asparaginyl residues. It plays a role in the repair and/or degradation of damaged proteins. The polypeptide is Protein-L-isoaspartate O-methyltransferase (Citrobacter koseri (strain ATCC BAA-895 / CDC 4225-83 / SGSC4696)).